The primary structure comprises 319 residues: Beta-ketoacyl-[acyl-carrier-protein] synthase III (319 aa).

Residues Cys112 and His246 contribute to the active site. The segment at 247–251 (QANFR) is ACP-binding. Asn276 is a catalytic residue.

Belongs to the thiolase-like superfamily. FabH family. In terms of assembly, homodimer.

Its subcellular location is the cytoplasm. The catalysed reaction is malonyl-[ACP] + acetyl-CoA + H(+) = 3-oxobutanoyl-[ACP] + CO2 + CoA. The protein operates within lipid metabolism; fatty acid biosynthesis. Functionally, catalyzes the condensation reaction of fatty acid synthesis by the addition to an acyl acceptor of two carbons from malonyl-ACP. Catalyzes the first condensation reaction which initiates fatty acid synthesis and may therefore play a role in governing the total rate of fatty acid production. Possesses both acetoacetyl-ACP synthase and acetyl transacylase activities. Its substrate specificity determines the biosynthesis of branched-chain and/or straight-chain of fatty acids. This Pseudoalteromonas atlantica (strain T6c / ATCC BAA-1087) protein is Beta-ketoacyl-[acyl-carrier-protein] synthase III.